Reading from the N-terminus, the 393-residue chain is NAD(P)H-quinone oxidoreductase subunit H, chloroplastic (393 aa).

Belongs to the complex I 49 kDa subunit family. As to quaternary structure, NDH is composed of at least 16 different subunits, 5 of which are encoded in the nucleus.

It localises to the plastid. The protein resides in the chloroplast thylakoid membrane. It catalyses the reaction a plastoquinone + NADH + (n+1) H(+)(in) = a plastoquinol + NAD(+) + n H(+)(out). The catalysed reaction is a plastoquinone + NADPH + (n+1) H(+)(in) = a plastoquinol + NADP(+) + n H(+)(out). Functionally, NDH shuttles electrons from NAD(P)H:plastoquinone, via FMN and iron-sulfur (Fe-S) centers, to quinones in the photosynthetic chain and possibly in a chloroplast respiratory chain. The immediate electron acceptor for the enzyme in this species is believed to be plastoquinone. Couples the redox reaction to proton translocation, and thus conserves the redox energy in a proton gradient. This chain is NAD(P)H-quinone oxidoreductase subunit H, chloroplastic, found in Trifolium subterraneum (Subterranean clover).